A 354-amino-acid polypeptide reads, in one-letter code: Uroporphyrinogen decarboxylase (354 aa).

Substrate is bound by residues 27–31 (RQAGR), F46, D77, Y154, T209, and H327.

This sequence belongs to the uroporphyrinogen decarboxylase family. Homodimer.

The protein resides in the cytoplasm. It catalyses the reaction uroporphyrinogen III + 4 H(+) = coproporphyrinogen III + 4 CO2. Its pathway is porphyrin-containing compound metabolism; protoporphyrin-IX biosynthesis; coproporphyrinogen-III from 5-aminolevulinate: step 4/4. Functionally, catalyzes the decarboxylation of four acetate groups of uroporphyrinogen-III to yield coproporphyrinogen-III. In Pseudomonas putida (strain ATCC 47054 / DSM 6125 / CFBP 8728 / NCIMB 11950 / KT2440), this protein is Uroporphyrinogen decarboxylase.